Reading from the N-terminus, the 490-residue chain is Cytochrome P450 2C55 (490 aa).

Cysteine 435 contributes to the heme binding site.

Belongs to the cytochrome P450 family. Heme serves as cofactor. As to expression, highest level in colon. Low levels in liver and small intestine.

It is found in the endoplasmic reticulum membrane. The protein resides in the microsome membrane. The catalysed reaction is an organic molecule + reduced [NADPH--hemoprotein reductase] + O2 = an alcohol + oxidized [NADPH--hemoprotein reductase] + H2O + H(+). In terms of biological role, metabolizes arachidonic acid mainly to 19-hydroxyeicosatetraenoic acid (HETE). The polypeptide is Cytochrome P450 2C55 (Mus musculus (Mouse)).